Consider the following 91-residue polypeptide: Small ribosomal subunit protein bS18 (91 aa).

Belongs to the bacterial ribosomal protein bS18 family. Part of the 30S ribosomal subunit. Forms a tight heterodimer with protein bS6.

Functionally, binds as a heterodimer with protein bS6 to the central domain of the 16S rRNA, where it helps stabilize the platform of the 30S subunit. This is Small ribosomal subunit protein bS18 from Wolbachia sp. subsp. Brugia malayi (strain TRS).